The following is a 368-amino-acid chain: Reverse transcriptase-like protein (368 aa).

The region spanning 91 to 318 is the Reverse transcriptase domain; the sequence is TRELTVPYWY…SELNWLGHKV (228 aa).

The protein resides in the mitochondrion. The sequence is that of Reverse transcriptase-like protein (RTL) from Chlamydomonas reinhardtii (Chlamydomonas smithii).